The chain runs to 90 residues: MDPLRAQQLAAELEVEMMADMYNRMTSACHRKCVPPHYKEAELSKGESVCLDRCVSKYLDIHERMGKKLTELSMQDEELMKRAQQSSGPV.

The short motif at 29–54 (CHRKCVPPHYKEAELSKGESVCLDRC) is the Twin CX3C motif element. Cystine bridges form between cysteine 29-cysteine 54 and cysteine 33-cysteine 50.

This sequence belongs to the small Tim family. In terms of assembly, heterohexamer; composed of 3 copies of TIMM9 and 3 copies of TIMM10/TIM10A, named soluble 70 kDa complex. The complex forms a 6-bladed alpha-propeller structure and associates with the TIMM22 component of the TIM22 complex. Interacts with multi-pass transmembrane proteins in transit. Also forms a complex composed of TIMM9, TIMM10/TIM10A and FXC1/TIM10B.

Its subcellular location is the mitochondrion inner membrane. In terms of biological role, mitochondrial intermembrane chaperone that participates in the import and insertion of multi-pass transmembrane proteins into the mitochondrial inner membrane. May also be required for the transfer of beta-barrel precursors from the TOM complex to the sorting and assembly machinery (SAM complex) of the outer membrane. Acts as a chaperone-like protein that protects the hydrophobic precursors from aggregation and guide them through the mitochondrial intermembrane space. This chain is Mitochondrial import inner membrane translocase subunit Tim10 (TIMM10), found in Bos taurus (Bovine).